The sequence spans 361 residues: Glucose 1-dehydrogenase (361 aa).

Zn(2+) is bound at residue Cys41. Thr43 serves as a coordination point for substrate. The Zn(2+) site is built by His68 and Glu69. Glu119, Glu156, and Asn160 together coordinate substrate. Glu156 provides a ligand contact to Zn(2+). Residues Asn216 to His218, Phe275 to Thr277, Ser304 to Asp306, and Lys349 each bind NADP(+). A substrate-binding site is contributed by Asp306.

Belongs to the zinc-containing alcohol dehydrogenase family. Glucose 1-dehydrogenase subfamily. In terms of assembly, homotetramer. Requires Zn(2+) as cofactor.

It carries out the reaction D-glucose + NAD(+) = D-glucono-1,5-lactone + NADH + H(+). The catalysed reaction is D-glucose + NADP(+) = D-glucono-1,5-lactone + NADPH + H(+). The enzyme catalyses D-galactose + NAD(+) = D-galactono-1,4-lactone + NADH + H(+). It catalyses the reaction D-galactose + NADP(+) = D-galactono-1,5-lactone + NADPH + H(+). Catalyzes the NAD(P)(+)-dependent oxidation of D-glucose to D-gluconate via gluconolactone. Is also significantly active with galactose as substrate, but not with mannose or glucose 6-phosphate. Can utilize both NAD(+) and NADP(+) as electron acceptor, with a marked preference for NADP(+). Physiologically, may be involved in the degradation of both glucose and galactose through a non-phosphorylative variant of the Entner-Doudoroff pathway. This chain is Glucose 1-dehydrogenase, found in Thermoplasma acidophilum (strain ATCC 25905 / DSM 1728 / JCM 9062 / NBRC 15155 / AMRC-C165).